We begin with the raw amino-acid sequence, 139 residues long: D-ribose pyranase (139 aa).

Histidine 20 acts as the Proton donor in catalysis. Residues aspartate 28, histidine 106, and 128–130 (YAN) contribute to the substrate site.

This sequence belongs to the RbsD / FucU family. RbsD subfamily. Homodecamer.

Its subcellular location is the cytoplasm. The enzyme catalyses beta-D-ribopyranose = beta-D-ribofuranose. Its pathway is carbohydrate metabolism; D-ribose degradation; D-ribose 5-phosphate from beta-D-ribopyranose: step 1/2. Catalyzes the interconversion of beta-pyran and beta-furan forms of D-ribose. The protein is D-ribose pyranase of Serratia proteamaculans (strain 568).